The sequence spans 342 residues: MQTLQTTSLRVADNQLFILDQQALPQEKRWLDASTVEALVGHIHALRVRGAPLIGLSASLLLALLAESGHRRDELAIALETLRAARPTAVNLMNNLDRMKQALRQEDFVPALAAEALRLIDEDKQLCDDIARAGSALVKPGSRLLTHCNTGGLATAGTGTALGVIARAYAQGNVQNVWVDETRPLLQGGRLTAWELGELGVPYQLITDSMAASLMAKGLVDAVWVGADRIAANGDVANKIGTYSLAVLAKFHGIPFYVAAPQTTLDPHCPNGDAIPIEQRAAGEVTGVAGSFGAVQWAPENAQVYNPAFDVTPAALISGWVLDSGVVTPEDVAKGVFRTEAA.

Residues 49–51 (RGA), Arg-86, and Gln-187 contribute to the substrate site. Asp-228 (proton donor) is an active-site residue. 238 to 239 (NK) serves as a coordination point for substrate.

This sequence belongs to the eIF-2B alpha/beta/delta subunits family. MtnA subfamily.

The catalysed reaction is 5-(methylsulfanyl)-alpha-D-ribose 1-phosphate = 5-(methylsulfanyl)-D-ribulose 1-phosphate. It functions in the pathway amino-acid biosynthesis; L-methionine biosynthesis via salvage pathway; L-methionine from S-methyl-5-thio-alpha-D-ribose 1-phosphate: step 1/6. Its function is as follows. Catalyzes the interconversion of methylthioribose-1-phosphate (MTR-1-P) into methylthioribulose-1-phosphate (MTRu-1-P). This chain is Methylthioribose-1-phosphate isomerase, found in Citrobacter koseri (strain ATCC BAA-895 / CDC 4225-83 / SGSC4696).